The following is an 87-amino-acid chain: Acyl-CoA-binding protein (87 aa).

S2 is subject to N-acetylserine. The region spanning 2–87 (SQAEFDKAAE…VEDLKKKYGI (86 aa)) is the ACB domain. An N6-acetyllysine; alternate modification is found at K8. K8 carries the post-translational modification N6-succinyllysine; alternate. Residue K14 coordinates an acyl-CoA. Position 17 is an N6-succinyllysine (K17). K19 bears the N6-acetyllysine mark. Phosphotyrosine is present on Y29. An acyl-CoA is bound by residues 29-33 (YSHYK), K55, and Y74. K55 bears the N6-acetyllysine; alternate mark. K55 bears the N6-succinyllysine; alternate mark. K55 bears the N6-(2-hydroxyisobutyryl)lysine; alternate mark. The residue at position 55 (K55) is an N6-malonyllysine; alternate. Residue K77 is modified to N6-acetyllysine; alternate. K77 carries the N6-succinyllysine; alternate modification.

The protein belongs to the ACBP family. In terms of assembly, monomer.

The protein localises to the endoplasmic reticulum. The protein resides in the golgi apparatus. Its function is as follows. Binds medium- and long-chain acyl-CoA esters with very high affinity and may function as an intracellular carrier of acyl-CoA esters. This Canis lupus familiaris (Dog) protein is Acyl-CoA-binding protein (DBI).